Consider the following 56-residue polypeptide: Defensin-1 (56 aa).

The N-terminal stretch at 1–24 (MKAIVVLLILALILCLYAMTTVEG) is a signal peptide. 3 disulfides stabilise this stretch: cysteine 26-cysteine 45, cysteine 31-cysteine 53, and cysteine 35-cysteine 55.

Its subcellular location is the secreted. Functionally, antibacterial protein involved in the immune response to septic injury. When combined with 14.026 kDa and 14.059 kDa hemolymph antimicrobial peptides, it has a strong cooperative activity against the Gram-positive bacteria B.subtilis and S.aureus, and against the Gram-negative bacteria E.coli DH5-alpha and K.pneumoniae ATCC 138833. Does not show detectable antibacterial activity when present alone. Has no hemolytic activity in human erythrocytes. This chain is Defensin-1, found in Centruroides limpidus (Mexican scorpion).